The primary structure comprises 98 residues: uncharacterized protein (98 aa).

This is an uncharacterized protein from Homo sapiens (Human).